A 207-amino-acid chain; its full sequence is Urease accessory protein UreG (207 aa).

14–21 (GPVGSGKT) is a binding site for GTP.

Belongs to the SIMIBI class G3E GTPase family. UreG subfamily. As to quaternary structure, homodimer. UreD, UreF and UreG form a complex that acts as a GTP-hydrolysis-dependent molecular chaperone, activating the urease apoprotein by helping to assemble the nickel containing metallocenter of UreC. The UreE protein probably delivers the nickel.

The protein localises to the cytoplasm. Facilitates the functional incorporation of the urease nickel metallocenter. This process requires GTP hydrolysis, probably effectuated by UreG. This Tolumonas auensis (strain DSM 9187 / NBRC 110442 / TA 4) protein is Urease accessory protein UreG.